The chain runs to 127 residues: I-Kappa-B like protein J1 (127 aa).

2 ANK repeats span residues 43–76 and 81–111; these read HGNT…DLDE and DGDT…RFGS.

This sequence belongs to the polydnaviridae I-Kappa-B-like protein family.

Its function is as follows. Suppresses the host immune response through NF-kappa-B inactivation. Possesses ankyrin repeat domains required for NF-kappa-B binding but lacks the regulatory regions required for dissociation from NF-kappa-B and degradation. Therefore, prevents host NF-kappa-B release and subsequent activation. The chain is I-Kappa-B like protein J1 (J2) from Microplitis demolitor (Parasitoid wasp).